Here is a 163-residue protein sequence, read N- to C-terminus: MLGISKKIETASQVDDQLVLPFDRRQKSRLRVELASGTEAALLLERGTVLRGGDLLQAEDGRVVQVVAADEPVLRVTAATPRELARAAYHLGNRHVPLEVGDGWLRLEQDHVLQEMLLGLGVQVEGQMAPFEPEAGAYGGGHRHHHDDDAPSIRQPARLRIHE.

The disordered stretch occupies residues 134–163 (EAGAYGGGHRHHHDDDAPSIRQPARLRIHE).

Belongs to the UreE family.

It is found in the cytoplasm. Involved in urease metallocenter assembly. Binds nickel. Probably functions as a nickel donor during metallocenter assembly. The polypeptide is Urease accessory protein UreE (Methylobacillus flagellatus (strain ATCC 51484 / DSM 6875 / VKM B-1610 / KT)).